A 151-amino-acid chain; its full sequence is Kinetoplast-associated protein 1 (151 aa).

Positions 1 to 9 (MLRVSVRSL) are excised as a propeptide. The interval 13–151 (ASSKAGSKAA…KKGAAKKAHK (139 aa)) is disordered. Composition is skewed to low complexity over residues 15–49 (SKAG…VPPV), 70–91 (AAAA…TPAK), and 101–111 (SKPSAPKQAAG). Over residues 112-151 (KMRKAAGKAQRKIKAAARKAAPKKMAKSFGKKGAAKKAHK) the composition is skewed to basic residues.

This sequence belongs to the KAP family. As to quaternary structure, associates with the kinetoplast DNA network.

It is found in the mitochondrion matrix. The protein resides in the kinetoplast. In terms of biological role, histone H1-like DNA-binding protein involved in the organization and segregation of kinetoplast DNA (kDNA). The mitochondrial DNA of kinetoplastid protozoa consists of about 5,000 minicircles and 20 to 30 maxicircles. These circular DNAs are held together by catenation into a highly organized compact disk structure referred to as a kinetoplast DNA (kDNA) network. Binds preferentially to a specific fragment of minicircle DNA and is able to compact kDNA networks through DNA charge neutralization and condensation. The sequence is that of Kinetoplast-associated protein 1 (KAP4) from Crithidia fasciculata.